Consider the following 420-residue polypeptide: Argininosuccinate synthase (420 aa).

Residue 23 to 31 coordinates ATP; it reads AYSGGLDTS. Residue tyrosine 102 participates in L-citrulline binding. Position 132 (glycine 132) interacts with ATP. L-aspartate is bound by residues threonine 134, asparagine 138, and aspartate 139. Asparagine 138 is an L-citrulline binding site. The L-citrulline site is built by arginine 142, serine 190, glutamate 274, and tyrosine 286.

Belongs to the argininosuccinate synthase family. Type 1 subfamily. In terms of assembly, homotetramer.

Its subcellular location is the cytoplasm. It catalyses the reaction L-citrulline + L-aspartate + ATP = 2-(N(omega)-L-arginino)succinate + AMP + diphosphate + H(+). The protein operates within amino-acid biosynthesis; L-arginine biosynthesis; L-arginine from L-ornithine and carbamoyl phosphate: step 2/3. This chain is Argininosuccinate synthase, found in Renibacterium salmoninarum (strain ATCC 33209 / DSM 20767 / JCM 11484 / NBRC 15589 / NCIMB 2235).